The primary structure comprises 89 residues: Teretoxin Tan22.12 (89 aa).

The signal sequence occupies residues 1–22 (MKVLFTLAMIVVTLCLGQRMRR).

The protein belongs to the teretoxin C (TC) superfamily. Contains 4 disulfide bonds. In terms of tissue distribution, expressed by the venom duct.

The protein resides in the secreted. The polypeptide is Teretoxin Tan22.12 (Terebra anilis (Auger snail)).